A 164-amino-acid polypeptide reads, in one-letter code: Large ribosomal subunit protein uL10 (164 aa).

Belongs to the universal ribosomal protein uL10 family. In terms of assembly, part of the ribosomal stalk of the 50S ribosomal subunit. The N-terminus interacts with L11 and the large rRNA to form the base of the stalk. The C-terminus forms an elongated spine to which L12 dimers bind in a sequential fashion forming a multimeric L10(L12)X complex.

Functionally, forms part of the ribosomal stalk, playing a central role in the interaction of the ribosome with GTP-bound translation factors. The chain is Large ribosomal subunit protein uL10 (rplJ) from Helicobacter pylori (strain J99 / ATCC 700824) (Campylobacter pylori J99).